The sequence spans 378 residues: Chaperone protein DnaJ (378 aa).

A J domain is found at 5–70; it reads DYYEVLGVAK…QKRAAYDQYG (66 aa). A CR-type zinc finger spans residues 138-216; sequence GYDTQIRVPS…CHGSGKVKET (79 aa). Zn(2+)-binding residues include C151, C154, C168, C171, C190, C193, C204, and C207. 4 CXXCXGXG motif repeats span residues 151–158, 168–175, 190–197, and 204–211; these read CEVCHGSG, CPTCHGQG, CPKCHGTG, and CVHCHGSG.

The protein belongs to the DnaJ family. Homodimer. The cofactor is Zn(2+).

The protein resides in the cytoplasm. Its function is as follows. Participates actively in the response to hyperosmotic and heat shock by preventing the aggregation of stress-denatured proteins and by disaggregating proteins, also in an autonomous, DnaK-independent fashion. Unfolded proteins bind initially to DnaJ; upon interaction with the DnaJ-bound protein, DnaK hydrolyzes its bound ATP, resulting in the formation of a stable complex. GrpE releases ADP from DnaK; ATP binding to DnaK triggers the release of the substrate protein, thus completing the reaction cycle. Several rounds of ATP-dependent interactions between DnaJ, DnaK and GrpE are required for fully efficient folding. Also involved, together with DnaK and GrpE, in the DNA replication of plasmids through activation of initiation proteins. In Burkholderia lata (strain ATCC 17760 / DSM 23089 / LMG 22485 / NCIMB 9086 / R18194 / 383), this protein is Chaperone protein DnaJ.